Consider the following 668-residue polypeptide: MAVLTHNQASQKVDELRKKLDEWAEDYYAKDAPVVEDAVYDKAYQELVELEKQFPDLVTSDSITQRVGGEIKSDLSKVEHPVPMLSMGDVFSKDELKEFDERITKLVGHPVAYNVELKIDGLSLSLEYTAGKLTRASTRGNGRVGEDVTANAKFIKDIPQTLPEPLTTEVRGECYMEKEAFAKLNAERDEKGEQVFANPRNAAAGSLRQLDARITKKRNLSTFIYTWVNPPKNITSQHQAIDEMNRLGFHTNQTGQRLESMDEVFKFIDEYTAKRNDLSYGIDGIVLKVDDLSLQNELGNTVKVPRWEIAYKFPPEEQETVVKEIEWTVGRTGVVTPTAVMDPVQLAGTVVSRASLHNPDYLREKGVRIGDTVKLHKAGDIIPEISSVVLNKRPKDSEPYQIPNKCPSCGQDLVHLQDEVALRCINPMCPAQVEEGIIHFASRGAMNIMGLGPRIVKQLIDKNFVNDVADLYHLTNEQLSQLDHFKDKSITNLLTSIENSKQNSAELLLFGLGIDHVGAKAARLILEKYKNLEKVSQLTVPELTSIDTIGETIAESLTAYFNQPSAQKLLQELRDSGLNMEYLGTVEEEAPDNFFKEKTVVLTGKLSDFTRSEFTKKLQDLGAKVTGSVSKKTDYLIYGADAGSKKDKAEKLQVPMLTEQEAIAKIEK.

Residues 37 to 41 (DAVYD), 86 to 87 (SM), and E116 each bind NAD(+). The N6-AMP-lysine intermediate role is filled by K118. Positions 139, 173, 288, and 312 each coordinate NAD(+). C406, C409, C424, and C429 together coordinate Zn(2+). The BRCT domain maps to 590 to 668 (APDNFFKEKT…EQEAIAKIEK (79 aa)).

This sequence belongs to the NAD-dependent DNA ligase family. LigA subfamily. It depends on Mg(2+) as a cofactor. Requires Mn(2+) as cofactor.

It carries out the reaction NAD(+) + (deoxyribonucleotide)n-3'-hydroxyl + 5'-phospho-(deoxyribonucleotide)m = (deoxyribonucleotide)n+m + AMP + beta-nicotinamide D-nucleotide.. In terms of biological role, DNA ligase that catalyzes the formation of phosphodiester linkages between 5'-phosphoryl and 3'-hydroxyl groups in double-stranded DNA using NAD as a coenzyme and as the energy source for the reaction. It is essential for DNA replication and repair of damaged DNA. The protein is DNA ligase of Lactobacillus gasseri (strain ATCC 33323 / DSM 20243 / BCRC 14619 / CIP 102991 / JCM 1131 / KCTC 3163 / NCIMB 11718 / NCTC 13722 / AM63).